The following is a 101-amino-acid chain: Putative pterin-4-alpha-carbinolamine dehydratase (101 aa).

This sequence belongs to the pterin-4-alpha-carbinolamine dehydratase family.

It catalyses the reaction (4aS,6R)-4a-hydroxy-L-erythro-5,6,7,8-tetrahydrobiopterin = (6R)-L-erythro-6,7-dihydrobiopterin + H2O. The polypeptide is Putative pterin-4-alpha-carbinolamine dehydratase (Rhodopseudomonas palustris (strain BisA53)).